The primary structure comprises 179 residues: Interleukin-22b (179 aa).

Positions 1-33 are cleaved as a signal peptide; the sequence is MAVLQKSMSFSLMGTLAASCLLLIALWAQEANA. Cystine bridges form between Cys-40–Cys-132 and Cys-89–Cys-178. N-linked (GlcNAc...) asparagine glycosylation is found at Asn-54, Asn-68, and Asn-97.

It belongs to the IL-10 family.

It is found in the secreted. Its function is as follows. Cytokine that contributes to the inflammatory response in vivo. The sequence is that of Interleukin-22b from Mus musculus (Mouse).